We begin with the raw amino-acid sequence, 356 residues long: 5-amino-6-(D-ribitylamino)uracil--L-tyrosine 4-hydroxyphenyl transferase (356 aa).

The 235-residue stretch at 47–281 (VTYIVNRNIN…AIARILLNTH (235 aa)) folds into the Radical SAM core domain. Cys61, Cys65, and Cys68 together coordinate [4Fe-4S] cluster.

Belongs to the radical SAM superfamily. CofH family. Consists of two subunits, CofG and CofH. It depends on [4Fe-4S] cluster as a cofactor.

The enzyme catalyses 5-amino-6-(D-ribitylamino)uracil + L-tyrosine + S-adenosyl-L-methionine = 5-amino-5-(4-hydroxybenzyl)-6-(D-ribitylimino)-5,6-dihydrouracil + 2-iminoacetate + 5'-deoxyadenosine + L-methionine + H(+). It functions in the pathway cofactor biosynthesis; coenzyme F0 biosynthesis. Its function is as follows. Catalyzes the radical-mediated synthesis of 5-amino-5-(4-hydroxybenzyl)-6-(D-ribitylimino)-5,6-dihydrouracil from 5-amino-6-(D-ribitylamino)uracil and L-tyrosine. The polypeptide is 5-amino-6-(D-ribitylamino)uracil--L-tyrosine 4-hydroxyphenyl transferase (Methanococcoides burtonii (strain DSM 6242 / NBRC 107633 / OCM 468 / ACE-M)).